A 311-amino-acid chain; its full sequence is Phospho-N-acetylmuramoyl-pentapeptide-transferase (311 aa).

A run of 10 helical transmembrane segments spans residues 2–22 (ENNVIVFFLSFLSSVVFIEGF), 48–68 (GTPTAAGLVFIPIFIAVLLNF), 74–94 (SFLIAFSALSYGLIGAIDDFM), 104–124 (ITAVQKLFMQFTAAFIIVYFI), 144–164 (LGWFYYLLSSVVIVGVSNAVN), 168–188 (GVDGLAGFVFIGSIVPLLIVG), 192–212 (VVYLSLIGLLMGFLWHNWHPA), 214–234 (IFMGDAGSLALGGILATSFAL), 237–257 (LELFLIFFGFIFLLETLSVII), and 288–308 (KIAFRFSTLALLVSLLGIIGW).

This sequence belongs to the glycosyltransferase 4 family. MraY subfamily. Mg(2+) serves as cofactor.

Its subcellular location is the cell inner membrane. It catalyses the reaction UDP-N-acetyl-alpha-D-muramoyl-L-alanyl-gamma-D-glutamyl-meso-2,6-diaminopimeloyl-D-alanyl-D-alanine + di-trans,octa-cis-undecaprenyl phosphate = di-trans,octa-cis-undecaprenyl diphospho-N-acetyl-alpha-D-muramoyl-L-alanyl-D-glutamyl-meso-2,6-diaminopimeloyl-D-alanyl-D-alanine + UMP. The protein operates within cell wall biogenesis; peptidoglycan biosynthesis. Its function is as follows. Catalyzes the initial step of the lipid cycle reactions in the biosynthesis of the cell wall peptidoglycan: transfers peptidoglycan precursor phospho-MurNAc-pentapeptide from UDP-MurNAc-pentapeptide onto the lipid carrier undecaprenyl phosphate, yielding undecaprenyl-pyrophosphoryl-MurNAc-pentapeptide, known as lipid I. This chain is Phospho-N-acetylmuramoyl-pentapeptide-transferase, found in Kosmotoga olearia (strain ATCC BAA-1733 / DSM 21960 / TBF 19.5.1).